A 411-amino-acid polypeptide reads, in one-letter code: Citrate synthase (411 aa).

Residues His304 and Asp363 contribute to the active site.

The protein belongs to the citrate synthase family.

The catalysed reaction is oxaloacetate + acetyl-CoA + H2O = citrate + CoA + H(+). It functions in the pathway carbohydrate metabolism; tricarboxylic acid cycle; isocitrate from oxaloacetate: step 1/2. This is Citrate synthase (gltA) from Rickettsia helvetica.